The following is a 78-amino-acid chain: MEKQNLIDMEGVVTESLPNAMFRVCLDNGCQVLTHISGKIRRNYIRILPGDRVKVELSPYDLTKGRITYRLRTKSSNP.

An S1-like domain is found at 1–72 (MEKQNLIDME…TKGRITYRLR (72 aa)).

This sequence belongs to the IF-1 family. In terms of assembly, component of the 30S ribosomal translation pre-initiation complex which assembles on the 30S ribosome in the order IF-2 and IF-3, IF-1 and N-formylmethionyl-tRNA(fMet); mRNA recruitment can occur at any time during PIC assembly.

Its subcellular location is the plastid. It is found in the chloroplast. Its function is as follows. One of the essential components for the initiation of protein synthesis. Stabilizes the binding of IF-2 and IF-3 on the 30S subunit to which N-formylmethionyl-tRNA(fMet) subsequently binds. Helps modulate mRNA selection, yielding the 30S pre-initiation complex (PIC). Upon addition of the 50S ribosomal subunit IF-1, IF-2 and IF-3 are released leaving the mature 70S translation initiation complex. The sequence is that of Translation initiation factor IF-1, chloroplastic from Anthoceros angustus (Hornwort).